Reading from the N-terminus, the 895-residue chain is Protein translocase subunit SecA (895 aa).

ATP-binding positions include Q87, 105–109, and D512; that span reads GEGKT. Over residues 833 to 852 the composition is skewed to basic and acidic residues; that stretch reads TQEEVEQAERQRQEMAKRET. The disordered stretch occupies residues 833–895; it reads TQEEVEQAER…KHCHGSKAKY (63 aa). Residues C877, C879, C888, and H889 each coordinate Zn(2+). Over residues 883 to 895 the composition is skewed to basic residues; it reads KKYKHCHGSKAKY.

The protein belongs to the SecA family. As to quaternary structure, monomer and homodimer. Part of the essential Sec protein translocation apparatus which comprises SecA, SecYEG and auxiliary proteins SecDF-YajC and YidC. Requires Zn(2+) as cofactor.

The protein resides in the cell inner membrane. The protein localises to the cytoplasm. The enzyme catalyses ATP + H2O + cellular proteinSide 1 = ADP + phosphate + cellular proteinSide 2.. Part of the Sec protein translocase complex. Interacts with the SecYEG preprotein conducting channel. Has a central role in coupling the hydrolysis of ATP to the transfer of proteins into and across the cell membrane, serving both as a receptor for the preprotein-SecB complex and as an ATP-driven molecular motor driving the stepwise translocation of polypeptide chains across the membrane. This is Protein translocase subunit SecA from Pasteurella multocida (strain Pm70).